A 150-amino-acid polypeptide reads, in one-letter code: S-protein homolog 28 (150 aa).

Asparagine 122 carries N-linked (GlcNAc...) asparagine glycosylation.

Belongs to the plant self-incompatibility (S1) protein family.

The protein resides in the secreted. The chain is S-protein homolog 28 from Arabidopsis thaliana (Mouse-ear cress).